Consider the following 257-residue polypeptide: Large ribosomal subunit protein eL8z (257 aa).

This sequence belongs to the eukaryotic ribosomal protein eL8 family.

This is Large ribosomal subunit protein eL8z (RPL7AA) from Arabidopsis thaliana (Mouse-ear cress).